The primary structure comprises 505 residues: RNA-splicing ligase RtcB homolog (505 aa).

The Mn(2+) site is built by D119, C122, H227, H259, and H353. A GMP-binding site is contributed by 226–230; it reads NHYAE. GMP is bound by residues 353 to 354, 402 to 405, S409, 428 to 431, and K504; these read HN, GGTM, and HGAG. H428 acts as the GMP-histidine intermediate in catalysis.

This sequence belongs to the RtcB family. In terms of assembly, catalytic component of the tRNA-splicing ligase complex. Mn(2+) is required as a cofactor.

The protein resides in the nucleus. Its subcellular location is the cytoplasm. The catalysed reaction is a 3'-end 3'-phospho-ribonucleotide-RNA + a 5'-end dephospho-ribonucleoside-RNA + GTP = a ribonucleotidyl-ribonucleotide-RNA + GMP + diphosphate. It catalyses the reaction a 3'-end 2',3'-cyclophospho-ribonucleotide-RNA + a 5'-end dephospho-ribonucleoside-RNA + GTP + H2O = a ribonucleotidyl-ribonucleotide-RNA + GMP + diphosphate + H(+). Catalytic subunit of the tRNA-splicing ligase complex that acts by directly joining spliced tRNA halves to mature-sized tRNAs by incorporating the precursor-derived splice junction phosphate into the mature tRNA as a canonical 3',5'-phosphodiester. May act as an RNA ligase with broad substrate specificity, and may function toward other RNAs. The polypeptide is RNA-splicing ligase RtcB homolog (Xenopus tropicalis (Western clawed frog)).